Consider the following 129-residue polypeptide: uncharacterized protein (129 aa).

This is an uncharacterized protein from Haemophilus influenzae (strain ATCC 51907 / DSM 11121 / KW20 / Rd).